Consider the following 154-residue polypeptide: Ecotin-like protein 2 (154 aa).

This sequence belongs to the protease inhibitor I11 (ecotin) family.

The chain is Ecotin-like protein 2 from Leishmania braziliensis.